We begin with the raw amino-acid sequence, 22 residues long: Major outer membrane protein (22 aa).

This sequence belongs to the Gram-negative porin family. In terms of assembly, disulfide bond interactions within and between MOMP molecules and other components form high molecular-weight oligomers.

It localises to the cell outer membrane. Functionally, structural rigidity of the outer membrane of elementary bodies and porin forming, permitting diffusion of solutes through the intracellular reticulate body membrane. In Avibacterium gallinarum (Pasteurella gallinarum), this protein is Major outer membrane protein (ompH).